Consider the following 946-residue polypeptide: Villin-4 (946 aa).

Gelsolin-like repeat units lie at residues 28–109 (NFKP…ETEK), 152–219 (VHVK…EDGK), 274–339 (LEHE…TIMF), and 641–715 (EIHH…PQFF). Disordered stretches follow at residues 744–783 (ATPS…ERHR) and 846–902 (TKST…PAPD). Positions 765–777 (QDKSQQRTRSMSH) are enriched in polar residues. A compositionally biased stretch (acidic residues) spans 874–883 (SENEPEDDEN). The region spanning 881 to 946 (DENSTIYPYE…NRLKSDLQLF (66 aa)) is the HP domain.

It belongs to the villin/gelsolin family.

The protein resides in the cytoplasm. It is found in the cytoskeleton. Its function is as follows. Ca(2+)-regulated actin-binding protein. Binds actin microfilaments (MFs). Involved in actin filament bundling, severing and capping. Caps the barbed end of actin filaments and is able to sever them in a calcium-dependent manner. This is Villin-4 from Oryza sativa subsp. indica (Rice).